Here is a 391-residue protein sequence, read N- to C-terminus: 3-ketoacyl-CoA thiolase (391 aa).

The active-site Acyl-thioester intermediate is Cys95. Catalysis depends on proton acceptor residues His347 and Cys377.

The protein belongs to the thiolase-like superfamily. Thiolase family. As to quaternary structure, heterotetramer of two alpha chains (FadB) and two beta chains (FadA).

The protein resides in the cytoplasm. The enzyme catalyses an acyl-CoA + acetyl-CoA = a 3-oxoacyl-CoA + CoA. It participates in lipid metabolism; fatty acid beta-oxidation. Its function is as follows. Catalyzes the final step of fatty acid oxidation in which acetyl-CoA is released and the CoA ester of a fatty acid two carbons shorter is formed. In Ectopseudomonas oleovorans (Pseudomonas oleovorans), this protein is 3-ketoacyl-CoA thiolase.